A 90-amino-acid chain; its full sequence is uncharacterized protein (90 aa).

The signal sequence occupies residues 1-18; that stretch reads MSRALFAVVLAFPLIALA.

This is an uncharacterized protein from Escherichia coli (strain K12).